A 274-amino-acid polypeptide reads, in one-letter code: Diaminopimelate epimerase (274 aa).

Substrate is bound by residues N11, Q44, and N64. C73 (proton donor) is an active-site residue. Substrate contacts are provided by residues 74–75 (GN), N157, N190, and 208–209 (ER). C217 (proton acceptor) is an active-site residue. Residue 218 to 219 (GS) participates in substrate binding.

This sequence belongs to the diaminopimelate epimerase family. Homodimer.

The protein resides in the cytoplasm. The enzyme catalyses (2S,6S)-2,6-diaminopimelate = meso-2,6-diaminopimelate. Its pathway is amino-acid biosynthesis; L-lysine biosynthesis via DAP pathway; DL-2,6-diaminopimelate from LL-2,6-diaminopimelate: step 1/1. In terms of biological role, catalyzes the stereoinversion of LL-2,6-diaminopimelate (L,L-DAP) to meso-diaminopimelate (meso-DAP), a precursor of L-lysine and an essential component of the bacterial peptidoglycan. In Escherichia coli O6:H1 (strain CFT073 / ATCC 700928 / UPEC), this protein is Diaminopimelate epimerase.